Here is a 742-residue protein sequence, read N- to C-terminus: Ectonucleotide pyrophosphatase/phosphodiesterase 1 (742 aa).

The Cytoplasmic portion of the chain corresponds to 1–113 (MELQNDLESL…TGFHSKVPFK (113 aa)). Residues 114–134 (IIFRTLFGSLVFAIFLILMIN) traverse the membrane as a helical segment. The Extracellular portion of the chain corresponds to 135-742 (IAKPHHSTRV…SIDDLVDSDT (608 aa)). N-linked (GlcNAc...) asparagine glycosylation is found at Asn161 and Asn204. The tract at residues 168–545 (PLTIVISLDG…VFTIGSHGYD (378 aa)) is phosphodiesterase. Residue Thr219 is the Nucleophile of the active site. Residues Asn264, Asn296, and Asn403 are each glycosylated (N-linked (GlcNAc...) asparagine). Residues 640–659 (EETEQDNVDNDNDDNDDGNT) show a composition bias toward acidic residues. Disordered stretches follow at residues 640-670 (EETEQDNVDNDNDDNDDGNTDEIAAMPSSSL) and 686-711 (TLLGETSPSSRSSSSSSIQASATAST). The segment covering 691 to 711 (TSPSSRSSSSSSIQASATAST) has biased composition (low complexity).

It belongs to the nucleotide pyrophosphatase/phosphodiesterase family. Autophosphorylated as part of the catalytic cycle of phosphodiesterase/pyrophosphatase activity. Post-translationally, N-glycosylated.

The protein localises to the membrane. It catalyses the reaction Hydrolytically removes 5'-nucleotides successively from the 3'-hydroxy termini of 3'-hydroxy-terminated oligonucleotides.. It carries out the reaction a ribonucleoside 5'-triphosphate + H2O = a ribonucleoside 5'-phosphate + diphosphate + H(+). The catalysed reaction is a 2'-deoxyribonucleoside 5'-triphosphate + H2O = a 2'-deoxyribonucleoside 5'-phosphate + diphosphate + H(+). In terms of biological role, mediates extracellular nucleotide derived phosphate hydrolysis along with NPP2 and PHO5. The protein is Ectonucleotide pyrophosphatase/phosphodiesterase 1 (NPP1) of Saccharomyces cerevisiae (strain ATCC 204508 / S288c) (Baker's yeast).